Reading from the N-terminus, the 165-residue chain is Ubiquitin-fold modifier-conjugating enzyme 1 (165 aa).

Cys-116 serves as the catalytic Glycyl thioester intermediate.

The protein belongs to the ubiquitin-conjugating enzyme family. UFC1 subfamily.

Its function is as follows. E2-like enzyme which forms an intermediate with UFM1 via a thioester linkage. In Drosophila mojavensis (Fruit fly), this protein is Ubiquitin-fold modifier-conjugating enzyme 1.